The following is an 803-amino-acid chain: Protein AMEIOTIC 1 homolog (803 aa).

2 disordered regions span residues 21 to 64 (RPQV…QSLS) and 264 to 333 (RLRQ…RWSA). Basic and acidic residues predominate over residues 39 to 50 (NGKDDANHDESK). A compositionally biased stretch (polar residues) spans 51–64 (NQSPGLPLSRQSLS). Residues 283 to 295 (KREEAESSMDKSR) are compositionally biased toward basic and acidic residues. Basic residues predominate over residues 296–313 (AARKKKAKTYKSPKKVEK). Residues 314–333 (RRVVEAKDGDPRRGKDRWSA) show a composition bias toward basic and acidic residues. A coiled-coil region spans residues 450–567 (VKKKVEELAE…SSFLSLKEQL (118 aa)). The segment at 651 to 688 (ISGGGSSSCPVASGPEQLPRSSSCPSIGPGGLPPSSRA) is disordered.

It localises to the nucleus. The protein resides in the chromosome. Plays a fundamental role in building the proper chromosome structure at the beginning of meiosis in male meiocytes. Required for the transition from leptotene to zygotene in meiocytes. Required for homologous chromosome pairing. This Oryza sativa subsp. japonica (Rice) protein is Protein AMEIOTIC 1 homolog.